Here is a 577-residue protein sequence, read N- to C-terminus: Arginine--tRNA ligase (577 aa).

The short motif at 122 to 132 is the 'HIGH' region element; sequence PNVAKEMHVGH.

The protein belongs to the class-I aminoacyl-tRNA synthetase family. Monomer.

It localises to the cytoplasm. The enzyme catalyses tRNA(Arg) + L-arginine + ATP = L-arginyl-tRNA(Arg) + AMP + diphosphate. The chain is Arginine--tRNA ligase from Histophilus somni (strain 129Pt) (Haemophilus somnus).